The primary structure comprises 478 residues: Calcium/calmodulin-dependent protein kinase type II subunit alpha (478 aa).

The residue at position 13 (Y13) is a Phosphotyrosine. Positions 13–271 constitute a Protein kinase domain; it reads YQLFEELGKG…AAEALKHPWI (259 aa). Residues 19–27 and K42 contribute to the ATP site; that span reads LGKGAFSVV. D135 acts as the Proton acceptor in catalysis. At S257 the chain carries Phosphoserine. T286 is modified (phosphothreonine; by autocatalysis). Residues 290-300 are calmodulin-binding; that stretch reads LKKFNARRKLK. The tract at residues 310–320 is interaction with BAALC; it reads TRNFSGGKSGG. Residues 314–341 are disordered; that stretch reads SGGKSGGNKKNDGVKESSESTNTTIEDE. Residues 322-331 show a composition bias toward basic and acidic residues; sequence KKNDGVKESS. Phosphoserine is present on residues S330, S331, and S333. T336 and T337 each carry phosphothreonine. Phosphoserine is present on S404.

Belongs to the protein kinase superfamily. CAMK Ser/Thr protein kinase family. CaMK subfamily. As to quaternary structure, there are 4 genes encoding calcium/calmodulin-dependent protein kinase type II chains: CAMK2A, CAMK2B, CAMK2G and CAMK2D. The corresponding proteins assemble into homo- or heteromultimeric holoenzymes composed of 12 subunits with two hexameric rings stacked one on top of the other. Interacts with BAALC. Interacts with MPDZ. Interacts with SYN1. Interacts with CAMK2N2. Interacts with SYNGAP1. Interacts with SYNPO2. Interacts with SHANK3. Interacts with GRIN2B. Interacts with CACNB2. Interacts with LRRC7. Interacts with GRM5. Interacts with DAGLA (via C-terminal); this interaction is enhanced by autophosphorylation of CAMK2A at Thr-286. Interacts with CAMK2N1; this interaction requires CAMK2A activation by Ca(2+). It depends on Mg(2+) as a cofactor. In terms of processing, autophosphorylation of Thr-286 following activation by Ca(2+)/calmodulin. Phosphorylation of Thr-286 locks the kinase into an activated state. Post-translationally, palmitoylated. Probably palmitoylated by ZDHHC3 and ZDHHC7. As to expression, expressed in brain. In terms of tissue distribution, expressed in skeletal muscle.

Its subcellular location is the cytoplasm. The protein localises to the synapse. It localises to the postsynaptic density. The protein resides in the cell projection. It is found in the dendritic spine. Its subcellular location is the dendrite. The enzyme catalyses L-seryl-[protein] + ATP = O-phospho-L-seryl-[protein] + ADP + H(+). It catalyses the reaction L-threonyl-[protein] + ATP = O-phospho-L-threonyl-[protein] + ADP + H(+). With respect to regulation, activated by Ca(2+)/calmodulin. Binding of calmodulin results in conformational change that relieves intrasteric autoinhibition and allows autophosphorylation of Thr-286 which turns the kinase in a constitutively active form and confers to the kinase a Ca(2+)-independent activity. In terms of biological role, calcium/calmodulin-dependent protein kinase that functions autonomously after Ca(2+)/calmodulin-binding and autophosphorylation, and is involved in various processes, such as synaptic plasticity, neurotransmitter release and long-term potentiation. Member of the NMDAR signaling complex in excitatory synapses, it regulates NMDAR-dependent potentiation of the AMPAR and therefore excitatory synaptic transmission. Regulates dendritic spine development. Also regulates the migration of developing neurons. Phosphorylates the transcription factor FOXO3 to activate its transcriptional activity. Phosphorylates the transcription factor ETS1 in response to calcium signaling, thereby decreasing ETS1 affinity for DNA. In response to interferon-gamma (IFN-gamma) stimulation, catalyzes phosphorylation of STAT1, stimulating the JAK-STAT signaling pathway. In response to interferon-beta (IFN-beta) stimulation, stimulates the JAK-STAT signaling pathway. Acts as a negative regulator of 2-arachidonoylglycerol (2-AG)-mediated synaptic signaling via modulation of DAGLA activity. Its function is as follows. Has no kinase activity. The polypeptide is Calcium/calmodulin-dependent protein kinase type II subunit alpha (Camk2a) (Mus musculus (Mouse)).